Here is a 129-residue protein sequence, read N- to C-terminus: MSILKEFREFAVKGNVVDMAVGVIIGGAFGKIVSSLVSDVVMPPIGWLIGGVDFKDLAIEIAPAKEGAEAVMLKYGAFIQNVFDFLIIAIAVFGMVKVINKIKKPAEAAPAEPTAEEKLLTEIRDLLKK.

2 consecutive transmembrane segments (helical) span residues 10 to 30 (FAVKGNVVDMAVGVIIGGAFG) and 76 to 96 (GAFIQNVFDFLIIAIAVFGMV).

It belongs to the MscL family. As to quaternary structure, homopentamer.

The protein localises to the cell inner membrane. Functionally, channel that opens in response to stretch forces in the membrane lipid bilayer. May participate in the regulation of osmotic pressure changes within the cell. This Actinobacillus pleuropneumoniae serotype 5b (strain L20) protein is Large-conductance mechanosensitive channel.